The chain runs to 361 residues: MKATLRTRLDGFQERFEELAALLAEPDVIADQARFRDYSREYAELEPLIEAWRSYRRTEDDLEAAEQMREDSDPEMRELAEEEWREAQARLEALDADVKRLLVPRDPDDASNVFLEIRAGTGGDEAALFAGDLFRMYSRYAEKVGWRIEVINASHGEQGGYKELIARVRGDNVYARLKFESGAHRVQRVPATESQGRIHTSACTVAVMAEASAVGEVELNSNDLRVDTFRSSGAGGQHVNTTDSAIRITHLPSGLVVECQEERSQHKNRAKAMALLAARLKQSAVDAQRQQQADTRRSLVGSGDRSERIRTYNFPQGRITDHRINLTLYKLGDVMAGELGEVIDPLIHEYQAEQLSALQAS.

Gln237 is subject to N5-methylglutamine.

This sequence belongs to the prokaryotic/mitochondrial release factor family. Methylated by PrmC. Methylation increases the termination efficiency of RF1.

It localises to the cytoplasm. In terms of biological role, peptide chain release factor 1 directs the termination of translation in response to the peptide chain termination codons UAG and UAA. This Chromohalobacter salexigens (strain ATCC BAA-138 / DSM 3043 / CIP 106854 / NCIMB 13768 / 1H11) protein is Peptide chain release factor 1.